We begin with the raw amino-acid sequence, 555 residues long: CTP synthase (555 aa).

The amidoligase domain stretch occupies residues 1–265 (MTRYIFITGG…GNRVCEKLNI (265 aa)). CTP is bound at residue Ser-13. UTP is bound at residue Ser-13. ATP-binding positions include 14 to 19 (SLGKGI) and Asp-71. Asp-71 and Glu-139 together coordinate Mg(2+). CTP-binding positions include 146–148 (DIE), 186–191 (KTKPTQ), and Lys-222. Residues 186 to 191 (KTKPTQ) and Lys-222 contribute to the UTP site. The Glutamine amidotransferase type-1 domain occupies 290-541 (TVAVVGKYVD…IKAGLAAKEA (252 aa)). Residue Gly-351 coordinates L-glutamine. Catalysis depends on Cys-378, which acts as the Nucleophile; for glutamine hydrolysis. Residues 379-382 (LGMQ), Glu-402, and Arg-469 each bind L-glutamine. Active-site residues include His-514 and Glu-516.

It belongs to the CTP synthase family. Homotetramer.

The catalysed reaction is UTP + L-glutamine + ATP + H2O = CTP + L-glutamate + ADP + phosphate + 2 H(+). It carries out the reaction L-glutamine + H2O = L-glutamate + NH4(+). It catalyses the reaction UTP + NH4(+) + ATP = CTP + ADP + phosphate + 2 H(+). It functions in the pathway pyrimidine metabolism; CTP biosynthesis via de novo pathway; CTP from UDP: step 2/2. Allosterically activated by GTP, when glutamine is the substrate; GTP has no effect on the reaction when ammonia is the substrate. The allosteric effector GTP functions by stabilizing the protein conformation that binds the tetrahedral intermediate(s) formed during glutamine hydrolysis. Inhibited by the product CTP, via allosteric rather than competitive inhibition. Its function is as follows. Catalyzes the ATP-dependent amination of UTP to CTP with either L-glutamine or ammonia as the source of nitrogen. Regulates intracellular CTP levels through interactions with the four ribonucleotide triphosphates. The polypeptide is CTP synthase (Coxiella burnetii (strain CbuK_Q154) (Coxiella burnetii (strain Q154))).